A 1598-amino-acid chain; its full sequence is Fatty acid synthase subunit alpha (1598 aa).

The tract at residues 96–134 is disordered; sequence RTQPHKSSAPQEPVPKAAPKAAPPVPVATAPLPEPGRQV. Residues 104–115 show a composition bias toward low complexity; the sequence is APQEPVPKAAPK. Residues 143-221 form the Carrier domain; it reads DVPIQSRDVI…QIVSGSTSTT (79 aa). O-(pantetheine 4'-phosphoryl)serine is present on Ser181. Residues 543–784 are ketoreductase (KR) domain; sequence LKGKTVLLTG…LAALLVNPFA (242 aa). A disordered region spans residues 818-844; it reads KQDSTSTPTHQHLPSHHHVDEPEIGKP. Over residues 820–829 the composition is skewed to polar residues; it reads DSTSTPTHQH. The 533-residue stretch at 992 to 1524 folds into the Ketosynthase family 3 (KS3) domain; sequence HEIVLTRDLA…QKGAQAIIVH (533 aa). Residue Cys1175 is the For beta-ketoacyl synthase activity of the active site. The segment at 1280–1301 is disordered; it reads ASDKTGRSVPSPGKGTLTNARE. Active-site for beta-ketoacyl synthase activity residues include His1409 and His1450.

It belongs to the thiolase-like superfamily. Fungal fatty acid synthetase subunit alpha family. As to quaternary structure, fatty acid synthase is composed of alpha and beta subunits.

The enzyme catalyses acetyl-CoA + n malonyl-CoA + 2n NADPH + 4n H(+) = a long-chain-acyl-CoA + n CoA + n CO2 + 2n NADP(+).. The catalysed reaction is a fatty acyl-[ACP] + malonyl-[ACP] + H(+) = a 3-oxoacyl-[ACP] + holo-[ACP] + CO2. It carries out the reaction a (3R)-hydroxyacyl-[ACP] + NADP(+) = a 3-oxoacyl-[ACP] + NADPH + H(+). It participates in mycotoxin biosynthesis. Fatty acid synthase subunit alpha; part of the gene cluster that mediates the biosynthesis of gramillins A and B, bicyclic lipopeptides that induce cell death in maize leaves but not in wheat leaves. The nonribosomal peptide synthetase GRA1 incorporates respectively a glutamic adic (Glu), a leucine (Leu), a serine (Ser), a hydroxyglutamine (HOGln), a 2-amino decanoic acid, and 2 cysteins (CysB and CysA). The biosynthesis of 2-amino decanoic acid incorporated in gramillins could be initiated by a fatty acid synthase composed of the alpha and beta subunits FGSG_00036 and FGSG_11656. The cytochrome P450 monooxygenase FGSG_15680 could hydroxylate the fatty acid chain. Subsequent oxidation to the ketone by the oxidoreductase FGSG_00048 and transamination by aminotransferase FGSG_00049 could form 2-amino-decanoic acid. On the other hand, FGSG_15680 could also be responsible for the HO-modified glutamine at the gamma-position. Whether hydroxylation occurs on the fully assembled product or on the Gln residue prior to assembly into the gramillins requires further proof. The thioredoxin FGSG_00043 could also be required for the disulfide-bond formation between CysA and CysB. The specific involvement of the remaining proteins from the cluster is more difficult to discern, but could have broader regulatory (FGSG_00040 and FGSG_11657) or enzymatic functions (FGSG_00044 and FGSG_00045). The final C-domain of GRA1 does not possess the expected sequence of a termination CT domain, often implicated in macrocyclization and release of a cyclopeptidein fungal NRPs; and the thioesterase FGSG_00047 may act in concert with the terminal C-domain of GRA1 to catalyze the formation of the macrocyclic anhydride and release of the products. The sequence is that of Fatty acid synthase subunit alpha from Gibberella zeae (strain ATCC MYA-4620 / CBS 123657 / FGSC 9075 / NRRL 31084 / PH-1) (Wheat head blight fungus).